The primary structure comprises 501 residues: 2,3-bisphosphoglycerate-independent phosphoglycerate mutase (501 aa).

Mn(2+)-binding residues include D12 and S62. Residue S62 is the Phosphoserine intermediate of the active site. Residues H121, 150-151 (RD), R182, R188, 253-256 (RSDR), and K322 contribute to the substrate site. Residues D389, H393, D430, H431, and H449 each coordinate Mn(2+).

This sequence belongs to the BPG-independent phosphoglycerate mutase family. Monomer. It depends on Mn(2+) as a cofactor.

The enzyme catalyses (2R)-2-phosphoglycerate = (2R)-3-phosphoglycerate. Its pathway is carbohydrate degradation; glycolysis; pyruvate from D-glyceraldehyde 3-phosphate: step 3/5. Catalyzes the interconversion of 2-phosphoglycerate and 3-phosphoglycerate. The sequence is that of 2,3-bisphosphoglycerate-independent phosphoglycerate mutase from Ehrlichia ruminantium (strain Welgevonden).